Reading from the N-terminus, the 251-residue chain is UstYa family oxidase phomYb (251 aa).

Residues 1–47 are disordered; it reads MDGYSSKKPRSASPSRSSLTEVEEEERDTLLKTVSLEEEDKSGENGP. Residues 58–78 form a helical membrane-spanning segment; the sequence is AIGILMLSNIAFIAAFLTVFV. Asparagine 135 carries N-linked (GlcNAc...) asparagine glycosylation. 2 consecutive short sequence motifs (HXXHC) follow at residues 160-164 and 187-191; these read HQLHC and HVSHC.

It belongs to the ustYa family.

The protein localises to the membrane. It participates in mycotoxin biosynthesis. In terms of biological role, ustYa family oxidase; part of the gene cluster that mediates the biosynthesis of the phomopsins, a group of hexapeptide mycotoxins which infects lupins and causes lupinosis disease in livestock. Within the pathway, phomYb is probably involved in the construction of the macrocyclic structure of the phomopsins. The pathway starts with the processing of the precursor phomA by several endopeptidases including kexin proteases as well as the cluster-specific S41 family peptidase phomP1 and the oligopeptidase phomG to produce 10 identical copies of the hexapeptide Tyr-Val-Ile-Pro-Ile-Asp. After being excised from the precursor peptide, the core peptides are cyclized and modified post-translationally by enzymes encoded within the gene cluster. The timing and order of proteolysis of the phomA precursor and PTMs are still unknown. Two tyrosinase-like enzymes, phomQ1 and phomQ2, catalyze the chlorination and hydroxylation of Tyr, respectively. PhomYb, is proposed to be involved in the construction of the macrocyclic structure. The other 4 ustYa family proteins may be involved in PTMs that generate the unique structure of phomopsin A. PhomYa is required for the hydroxylation of C-beta of Tyr. PhomYc, phomYd, and phomYe are responsible for the biosynthesis of 2,3-dehydroisoleucine (dIle), 2,3-dehydroaspartic acid (dAsp), and 3,4-dehydroproline (dPro), respectively. While dIle formation by phomYc is indispensable for the installation of dAsp by phomYd, the order of the other PTMs have not been elucidated yet. Most of the biosynthetic enzymes likely have broad substrate specificity, and thus, there might be a metabolic grid from a precursor to phomopsin A. The enzyme(s) responsible for the biosynthesis of 3,4-dehydrovaline (dVal) have also not been identified yet. Finally, phomM acts as an S-adenosylmethionine-dependent alpha-N-methyltransferase that catalyzes two successive N-methylation reactions, converting N-desmethyl-phomopsin A to phomopsin A and phomopsin A further to an N,N-dimethylated congener called phomopsin E. The sequence is that of UstYa family oxidase phomYb from Diaporthe leptostromiformis (Lupinosis disease fungus).